The chain runs to 370 residues: N-acetyldiaminopimelate deacetylase (370 aa).

The active site involves aspartate 67. Glutamate 126 (proton acceptor) is an active-site residue.

The protein belongs to the peptidase M20A family. N-acetyldiaminopimelate deacetylase subfamily.

The catalysed reaction is N-acetyl-(2S,6S)-2,6-diaminopimelate + H2O = (2S,6S)-2,6-diaminopimelate + acetate. It participates in amino-acid biosynthesis; L-lysine biosynthesis via DAP pathway; LL-2,6-diaminopimelate from (S)-tetrahydrodipicolinate (acetylase route): step 3/3. Catalyzes the conversion of N-acetyl-diaminopimelate to diaminopimelate and acetate. The sequence is that of N-acetyldiaminopimelate deacetylase from Exiguobacterium sibiricum (strain DSM 17290 / CCUG 55495 / CIP 109462 / JCM 13490 / 255-15).